We begin with the raw amino-acid sequence, 172 residues long: uncharacterized protein (172 aa).

Positions 3–171 (KKVAIILSNE…FNREIVKQLQ (169 aa)) constitute a PfpI endopeptidase domain.

The protein belongs to the peptidase C56 family.

This is an uncharacterized protein from Staphylococcus haemolyticus (strain JCSC1435).